A 346-amino-acid chain; its full sequence is Very-long-chain 3-oxoacyl-CoA reductase (346 aa).

A helical membrane pass occupies residues 19 to 39 (VLLGALLVGVFKLTVFILSVT). 7 residues coordinate NADP(+): valine 65, aspartate 119, asparagine 146, tyrosine 220, lysine 224, valine 253, and serine 255. The Proton donor role is filled by tyrosine 220. Lysine 224 (lowers pKa of active site Tyr) is an active-site residue.

This sequence belongs to the short-chain dehydrogenases/reductases (SDR) family.

Its subcellular location is the endoplasmic reticulum membrane. The enzyme catalyses a very-long-chain (3R)-3-hydroxyacyl-CoA + NADP(+) = a very-long-chain 3-oxoacyl-CoA + NADPH + H(+). It functions in the pathway lipid metabolism; fatty acid biosynthesis. In terms of biological role, component of the microsomal membrane bound fatty acid elongation system, which produces the 26-carbon very long-chain fatty acids (VLCFA) from palmitate. Catalyzes the reduction of the 3-ketoacyl-CoA intermediate that is formed in each cycle of fatty acid elongation. VLCFAs serve as precursors for ceramide and sphingolipids. This chain is Very-long-chain 3-oxoacyl-CoA reductase, found in Scheffersomyces stipitis (strain ATCC 58785 / CBS 6054 / NBRC 10063 / NRRL Y-11545) (Yeast).